The following is a 334-amino-acid chain: MRFVDEVVIKLQAGKGGNGCVSFRREKYVPRGGPDGGDGGHGGSIYLKADENVNTLIDYRYKREYYAENGRPGEGRNCYGKAGEDMYLIVPVGTSVFDLETNKKIGEVLNNGEILKLVSGGKRGIGNTHFKSSTNQAPRKFTLGEEGEYKEVRLELNLLADIALLGLPNAGKSTLIRSVSEATPKVADYPFTTMYPHLGVVKVGVDSFVMADIPGVIEGAAEGAGLGLRFLKHLTRARCVLHVVDICPFNESDPVENYFAVEKELKKYSEELYDKPRFLVINKIDLLADEVEEKCQEFVKQIGYEGNYYMISAAMKKGTEELAKKLNEFLHKQE.

Residues 1–159 form the Obg domain; that stretch reads MRFVDEVVIK…KEVRLELNLL (159 aa). The 172-residue stretch at 160–331 folds into the OBG-type G domain; it reads ADIALLGLPN…LAKKLNEFLH (172 aa). Residues 166–173, 191–195, 212–215, 282–285, and 312–314 each bind GTP; these read GLPNAGKS, FTTMY, DIPG, NKID, and SAA. Positions 173 and 193 each coordinate Mg(2+).

This sequence belongs to the TRAFAC class OBG-HflX-like GTPase superfamily. OBG GTPase family. As to quaternary structure, monomer. Requires Mg(2+) as cofactor.

The protein localises to the cytoplasm. Its function is as follows. An essential GTPase which binds GTP, GDP and possibly (p)ppGpp with moderate affinity, with high nucleotide exchange rates and a fairly low GTP hydrolysis rate. Plays a role in control of the cell cycle, stress response, ribosome biogenesis and in those bacteria that undergo differentiation, in morphogenesis control. The sequence is that of GTPase Obg from Francisella philomiragia subsp. philomiragia (strain ATCC 25017 / CCUG 19701 / FSC 153 / O#319-036).